Reading from the N-terminus, the 331-residue chain is MVKVAINGFGRIGRLVMRIALSRANVEVVAINDPFITVDYAAYMFKYDSTHGKYAGDVQYEGNTLVIDGKKIKVFQERDPAQLPWGEEGIDIAIDSTGVFKELDSAQKHIDAGAKKVVITAPSSTAPMFVMGVNEEKYAGETIVSNASCTTNCLAPLAKVIDEQFGIEEGLMTTVHSLTATQKTVDGPSMKDWRGGRTASGNIIPSSTGAAKAVGKVLPQLNGKLTGMAFRVPTVDVSVVDLTVKLNKETTYDEIKAAIKAASEGKLKGILGYTEDAVVSTDFLGDNNSSIFDASAGIMLSPKFVKLVSWYDNEYGYSTRVVDLVEHVAAN.

NAD(+) is bound by residues 11-12, Asp-33, and Arg-78; that span reads RI. D-glyceraldehyde 3-phosphate-binding positions include 148–150, Thr-179, 208–209, and Arg-231; these read SCT and TG. The Nucleophile role is filled by Cys-149. Asn-313 provides a ligand contact to NAD(+).

Belongs to the glyceraldehyde-3-phosphate dehydrogenase family. In terms of assembly, homotetramer.

It localises to the cytoplasm. It catalyses the reaction D-glyceraldehyde 3-phosphate + phosphate + NAD(+) = (2R)-3-phospho-glyceroyl phosphate + NADH + H(+). It functions in the pathway carbohydrate degradation; glycolysis; pyruvate from D-glyceraldehyde 3-phosphate: step 1/5. This chain is Glyceraldehyde-3-phosphate dehydrogenase (GPD), found in Eremothecium gossypii (strain ATCC 10895 / CBS 109.51 / FGSC 9923 / NRRL Y-1056) (Yeast).